A 535-amino-acid polypeptide reads, in one-letter code: Dimethylaniline monooxygenase [N-oxide-forming] 2 (535 aa).

Ala2 bears the N-acetylalanine mark. Residues 9-13 (GAGVS), Glu32, 40-41 (LW), and 61-62 (NT) contribute to the FAD site. NADP(+)-binding positions include 60–61 (TN) and 195–198 (SASD). Lys492 participates in a covalent cross-link: Glycyl lysine isopeptide (Lys-Gly) (interchain with G-Cter in SUMO). A helical transmembrane segment spans residues 510–530 (LSASFLMKILALVAVFVAFFS).

It belongs to the FMO family. FAD is required as a cofactor. It depends on Mg(2+) as a cofactor. In terms of tissue distribution, lung.

It localises to the microsome membrane. The protein resides in the endoplasmic reticulum membrane. Its function is as follows. Catalyzes the oxidative metabolism of numerous xenobiotics, including mainly therapeutic drugs and insecticides that contain a soft nucleophile, most commonly nitrogen and sulfur and participates to their bioactivation. This chain is Dimethylaniline monooxygenase [N-oxide-forming] 2, found in Cavia porcellus (Guinea pig).